Consider the following 577-residue polypeptide: MNHQETMTDYLMAFIEGLKNSGVEQAVISPGSRSTPLALLLHRETAIQTFVDVDERSAAFFALGLSKASQKPVVLLCTSGTAAANYYPAICEANISHVPLVVLTTDRPHELRQVGAPQAMDQLQMYQNHVKLFVEMALPEATEEMLNYAYWQGAKGAAFAQQTPAAPVHLNFPLREPLLPDLERKTKSSQQTALFAGQSILSTEQVQQLADQWYQKNGVLVVGGSHTEEEATLFIQLAEALQWPLLADPLANIVTHGQNSEVVIAHSDLFLNVATLPQEPEVVVRFGSLPISKNIMLWLKRLATTETAFYFVDENGQWQEQLKKSQTVIQAKETTFVEQLLTVVKPTEATWLAQWLLLEKTVSEVLLETLNATELNETTASLAVHQTMKENGQLFVSNSMAIRYLDRFMDSRPYRMFGNRGINGIDGIVSTALGMSAIAPTQQNVLLIGDLALYHDMNGLFLAKRYQLPLTIVLLNNNGGGIFSFLSQRTLREDDFEPLFGTPLDLDFSLVAELYGASYQEVKTIAELKQILQAAAEEPQFQVIEVKGNRQENVHLYESILAEIGRRVERQGISWNG.

Belongs to the TPP enzyme family. MenD subfamily. Homodimer. Mg(2+) serves as cofactor. The cofactor is Mn(2+). Thiamine diphosphate is required as a cofactor.

The enzyme catalyses isochorismate + 2-oxoglutarate + H(+) = 5-enolpyruvoyl-6-hydroxy-2-succinyl-cyclohex-3-ene-1-carboxylate + CO2. The protein operates within quinol/quinone metabolism; 1,4-dihydroxy-2-naphthoate biosynthesis; 1,4-dihydroxy-2-naphthoate from chorismate: step 2/7. It functions in the pathway quinol/quinone metabolism; menaquinone biosynthesis. Catalyzes the thiamine diphosphate-dependent decarboxylation of 2-oxoglutarate and the subsequent addition of the resulting succinic semialdehyde-thiamine pyrophosphate anion to isochorismate to yield 2-succinyl-5-enolpyruvyl-6-hydroxy-3-cyclohexene-1-carboxylate (SEPHCHC). This chain is 2-succinyl-5-enolpyruvyl-6-hydroxy-3-cyclohexene-1-carboxylate synthase, found in Enterococcus faecalis (strain ATCC 700802 / V583).